The primary structure comprises 263 residues: Endonuclease 8 (263 aa).

Catalysis depends on Pro-2, which acts as the Schiff-base intermediate with DNA. The active-site Proton donor is the Glu-3. The Proton donor; for beta-elimination activity role is filled by Lys-53. Positions 70, 125, and 169 each coordinate DNA. The FPG-type zinc-finger motif lies at 229–263; it reads KVFHREGESCERCGGTIERTMLSSRPFYWCPHCQS. Arg-253 acts as the Proton donor; for delta-elimination activity in catalysis.

The protein belongs to the FPG family. Zn(2+) is required as a cofactor.

It carries out the reaction 2'-deoxyribonucleotide-(2'-deoxyribose 5'-phosphate)-2'-deoxyribonucleotide-DNA = a 3'-end 2'-deoxyribonucleotide-(2,3-dehydro-2,3-deoxyribose 5'-phosphate)-DNA + a 5'-end 5'-phospho-2'-deoxyribonucleoside-DNA + H(+). Functionally, involved in base excision repair of DNA damaged by oxidation or by mutagenic agents. Acts as a DNA glycosylase that recognizes and removes damaged bases. Has a preference for oxidized pyrimidines, such as thymine glycol, 5,6-dihydrouracil and 5,6-dihydrothymine. Has AP (apurinic/apyrimidinic) lyase activity and introduces nicks in the DNA strand. Cleaves the DNA backbone by beta-delta elimination to generate a single-strand break at the site of the removed base with both 3'- and 5'-phosphates. The chain is Endonuclease 8 from Pectobacterium atrosepticum (strain SCRI 1043 / ATCC BAA-672) (Erwinia carotovora subsp. atroseptica).